A 445-amino-acid polypeptide reads, in one-letter code: UDP-N-acetylmuramate--L-alanine ligase (445 aa).

108-114 (GSDGKTT) is an ATP binding site.

Belongs to the MurCDEF family.

The protein resides in the cytoplasm. It catalyses the reaction UDP-N-acetyl-alpha-D-muramate + L-alanine + ATP = UDP-N-acetyl-alpha-D-muramoyl-L-alanine + ADP + phosphate + H(+). Its pathway is cell wall biogenesis; peptidoglycan biosynthesis. Functionally, cell wall formation. The chain is UDP-N-acetylmuramate--L-alanine ligase from Pseudothermotoga lettingae (strain ATCC BAA-301 / DSM 14385 / NBRC 107922 / TMO) (Thermotoga lettingae).